Reading from the N-terminus, the 399-residue chain is uncharacterized protein (399 aa).

8 WD repeats span residues 59 to 99 (EHKD…QICQ), 102 to 141 (GHKD…EFIT), 144 to 185 (ETVD…QVMY), 187 to 227 (HTAP…PECR), 241 to 280 (ETAA…ILAS), 283 to 322 (AQTE…FRKS), 324 to 363 (PHEQ…LLGE), and 366 to 399 (GHQE…DCEH).

The protein localises to the cytoplasm. The protein resides in the nucleus. This is an uncharacterized protein from Schizosaccharomyces pombe (strain 972 / ATCC 24843) (Fission yeast).